The primary structure comprises 126 residues: Small nuclear ribonucleoprotein Sm D3 (126 aa).

N-acetylserine is present on Ser-2. The 73-residue stretch at 5–77 (VPIKVLHEAE…IRFLILPDML (73 aa)) folds into the Sm domain. A run of 5 repeats spans residues 110–111 (RG), 112–113 (RG), 114–115 (RG), 116–117 (MG), and 118–119 (RG). The segment at 110 to 119 (RGRGRGMGRG) is 5 X 2 AA tandem repeats of [RM]-G; required for interaction with SMN1.

It belongs to the snRNP core protein family. As to quaternary structure, core component of the spliceosomal U1, U2, U4 and U5 small nuclear ribonucleoproteins (snRNPs), the building blocks of the spliceosome. Most spliceosomal snRNPs contain a common set of Sm proteins, SNRPB, SNRPD1, SNRPD2, SNRPD3, SNRPE, SNRPF and SNRPG that assemble in a heptameric protein ring on the Sm site of the small nuclear RNA to form the core snRNP. Component of the U1 snRNP. The U1 snRNP is composed of the U1 snRNA and the 7 core Sm proteins SNRPB, SNRPD1, SNRPD2, SNRPD3, SNRPE, SNRPF and SNRPG, and at least three U1 snRNP-specific proteins SNRNP70/U1-70K, SNRPA/U1-A and SNRPC/U1-C. Component of the U4/U6-U5 tri-snRNP complex composed of the U4, U6 and U5 snRNAs and at least PRPF3, PRPF4, PRPF6, PRPF8, PRPF31, SNRNP200, TXNL4A, SNRNP40, SNRPB, SNRPD1, SNRPD2, SNRPD3, SNRPE, SNRPF, SNRPG, DDX23, CD2BP2, PPIH, SNU13, EFTUD2, SART1 and USP39, plus LSM2, LSM3, LSM4, LSM5, LSM6, LSM7 and LSM8. Component of the U7 snRNP complex, or U7 Sm protein core complex, that is composed of the U7 snRNA and at least LSM10, LSM11, SNRPB, SNRPD3, SNRPE, SNRPF and SNRPG; the complex does not contain SNRPD1 and SNRPD2. Component of the minor spliceosome, which splices U12-type introns. Part of the SMN-Sm complex that contains SMN1, GEMIN2/SIP1, DDX20/GEMIN3, GEMIN4, GEMIN5, GEMIN6, GEMIN7, GEMIN8, STRAP/UNRIP and the Sm proteins SNRPB, SNRPD1, SNRPD2, SNRPD3, SNRPE, SNRPF and SNRPG; catalyzes core snRNPs assembly. Forms a 6S pICln-Sm complex composed of CLNS1A/pICln, SNRPD1, SNRPD2, SNRPE, SNRPF and SNRPG; ring-like structure where CLNS1A/pICln mimics additional Sm proteins and which is unable to assemble into the core snRNP. Interacts (via C-terminus) with SMN1 (via Tudor domain); the interaction is direct. In terms of processing, methylated on arginine residues by PRMT5 and PRMT7; probable asymmetric dimethylation which is required for assembly and biogenesis of snRNPs.

The protein localises to the cytoplasm. It localises to the cytosol. The protein resides in the nucleus. Functionally, plays a role in pre-mRNA splicing as a core component of the spliceosomal U1, U2, U4 and U5 small nuclear ribonucleoproteins (snRNPs), the building blocks of the spliceosome. Component of both the pre-catalytic spliceosome B complex and activated spliceosome C complexes. As a component of the minor spliceosome, involved in the splicing of U12-type introns in pre-mRNAs. As part of the U7 snRNP it is involved in histone pre-mRNA 3'-end processing. This Homo sapiens (Human) protein is Small nuclear ribonucleoprotein Sm D3 (SNRPD3).